We begin with the raw amino-acid sequence, 491 residues long: Probable ribonuclease FAU-1 (491 aa).

This sequence belongs to the FAU-1 family.

Probable RNase involved in rRNA stability through maturation and/or degradation of precursor rRNAs. Binds to RNA in loop regions with AU-rich sequences. In Thermofilum pendens (strain DSM 2475 / Hrk 5), this protein is Probable ribonuclease FAU-1.